An 89-amino-acid chain; its full sequence is Cell division protein ZapA (89 aa).

It belongs to the ZapA family. Type 2 subfamily. In terms of assembly, homodimer. Interacts with FtsZ.

The protein localises to the cytoplasm. Functionally, activator of cell division through the inhibition of FtsZ GTPase activity, therefore promoting FtsZ assembly into bundles of protofilaments necessary for the formation of the division Z ring. It is recruited early at mid-cell but it is not essential for cell division. This Bacillus mycoides (strain KBAB4) (Bacillus weihenstephanensis) protein is Cell division protein ZapA.